Here is a 244-residue protein sequence, read N- to C-terminus: DNA polymerase sliding clamp (244 aa).

This sequence belongs to the PCNA family. In terms of assembly, homotrimer. The subunits circularize to form a toroid; DNA passes through its center. Replication factor C (RFC) is required to load the toroid on the DNA.

Its function is as follows. Sliding clamp subunit that acts as a moving platform for DNA processing. Responsible for tethering the catalytic subunit of DNA polymerase and other proteins to DNA during high-speed replication. This chain is DNA polymerase sliding clamp, found in Methanothrix thermoacetophila (strain DSM 6194 / JCM 14653 / NBRC 101360 / PT) (Methanosaeta thermophila).